A 303-amino-acid chain; its full sequence is tRNA (guanine-N(7)-)-methyltransferase (303 aa).

A disordered region spans residues 1 to 64; it reads MPKPHQVQVI…STSDKISLPR (64 aa). Over residues 10–38 the composition is skewed to basic and acidic residues; that stretch reads IKDRETQLREQQEAESKRRTYRDVKEETR. S-adenosyl-L-methionine-binding positions include Gly118, 141 to 142, 177 to 178, and Cys197; these read EI and NA. The active site involves Asp200. Residue 275 to 277 participates in S-adenosyl-L-methionine binding; sequence TEE.

It belongs to the class I-like SAM-binding methyltransferase superfamily. TrmB family. In terms of assembly, forms a complex with TRM82.

The protein localises to the nucleus. The enzyme catalyses guanosine(46) in tRNA + S-adenosyl-L-methionine = N(7)-methylguanosine(46) in tRNA + S-adenosyl-L-homocysteine. Its pathway is tRNA modification; N(7)-methylguanine-tRNA biosynthesis. Catalyzes the formation of N(7)-methylguanine at position 46 (m7G46) in tRNA. The chain is tRNA (guanine-N(7)-)-methyltransferase from Scheffersomyces stipitis (strain ATCC 58785 / CBS 6054 / NBRC 10063 / NRRL Y-11545) (Yeast).